A 720-amino-acid chain; its full sequence is Capsid protein (720 aa).

Disordered regions lie at residues 546-569 and 616-691; these read GTQR…GPNF and TEPS…RDRD. A compositionally biased stretch (acidic residues) spans 652-664; it reads PTDEDERYLEAEA.

This sequence belongs to the anelloviridae capsid protein family.

It localises to the virion. Its function is as follows. Self-assembles to form an icosahedral capsid with a T=1 symmetry, about 30 nm in diameter, and consisting of 60 capsid proteins. The capsid encapsulates the genomic DNA. Capsid protein is involved in attachment and entry into the host cell. The chain is Capsid protein from Torque teno douroucouli virus (isolate At-TTV3).